The primary structure comprises 1447 residues: MKKLFVVLVVMPLIYGDNFPCSKLTNRTIGNQWNLIETFLLNYSSRLPPNSDVVLGDYFPTVQPWFNCIRNNSNDLYVTLENLKALYWDYATENITWNHRQRLNVVVNGYPYSITVTTTRNFNSAEGAIICICKGSPPTTTTESSLTCNWGSECRLNHKFPICPSNSEANCGNMLYGLQWFADEVVAYLHGASYRISFENQWSGTVTFGDMRATTLEVSGTLVDLWWFNPVYDVSYYRVNNKNGTTVVSNCTDQCASYVANVFTTQPGGFIPSDFSFNNWFLLTNSSTLVSGKLVTKQPLLVNCLWPVPSFEEAASTFCFEGAGFDQCNGAVLNNTVDVIRFNLNFTTNVQSGKGATVFSLNTTGGVTLEISCYTVSDSSFFSYGEIPFGVTDGPRYCYVHYNGTALKYLGTLPPSVKEIAISKWGHFYINGYNFFSTFPIDCISFNLTTGDSDVFWTIAYTSYTEALVQVENTAITKVTYCNSHVNNIKCSQITANLNNGFYPVSSSEVGLVNKSVVLLPSFYTHTIVNITIGLGMKRSGYGQPIASTLSNITLPMQDHNTDVYCIRSDQFSVYVHSTCKSALWDNIFKRNCTDVLDATAVIKTGTCPFSFDKLNNYLTFNKFCLSLSPVGANCKFDVAARTRTNEQVVRSLYVIYEEGDNIVGVPSDNSGVHDLSVLHLDSCTDYNIYGRTGVGIIRKTNRTLLSGLYYTSLSGDLLGFKNVSDGVIYSVTPCDVSAQAAVIDGTIVGAITSINSELLGLTHWTTTPNFYYYSIYNYTNDRTRGTAIDSNDVDCEPVITYSNIGVCKNGAFVFINVTHSDGDVQPISTGNVTIPTNFTISVQVEYIQVYTTPVSIDCSRYVCNGNPRCNKLLTQYVSACQTIEQALAMGARLENMEVDSMLFVSENALKLASVEAFNSSETLDPIYKEWPNIGGSWLEGLKYILPSHNSKRKYRSAIEDLLFDKVVTSGLGTVDEDYKRCTGGYDIADLVCAQYYNGIMVLPGVANADKMTMYTASLAGGITLGALGGGAVAIPFAVAVQARLNYVALQTDVLNKNQQILASAFNQAIGNITQSFGKVNDAIHXTSRGLATVAKALAKVQDVVXIQGQALSHLTVQLQNNFQAISSSISDIYNRLDELSADAQVDRLITGRLTALNAFVSQTLTRQAEVRASRQLAKDKVNECVRSQSQRFGFCGNGTHLFSLANAAPNGMIFFHTVLLPTAYETVTAWPGICASDGDRTFGLVVKDVQLTLFRNLDDKFYLTPRTMYQPRVATSSDFVQIEGCDVLFVNATVSDLPSIIPDYIDINQTVQDILENFRPNWTVPELTFDIFNATYLNLTGEIDDLEFRSEKLHNTTVELAILIDNINNTLVNLEWLNRIETYVKWPWYVWLLIGLVVIFCIPLLLFCCCSTGCCGCIGCLGSCCHSICSRRQFENYEPIEKVHVH.

An N-terminal signal peptide occupies residues 1–28; sequence MKKLFVVLVVMPLIYGDNFPCSKLTNRT. 2 S1 regions span residues 17–774 and 29–774; these read DNFP…FYYY and IGNQ…FYYY. The Virion surface portion of the chain corresponds to 29 to 1388; it reads IGNQWNLIET…NRIETYVKWP (1360 aa). Residues 655–799 form an interaction with host ANPEP region; that stretch reads VIYEEGDNIV…DSNDVDCEPV (145 aa). Positions 775–1447 are S2; sequence SIYNYTNDRT…YEPIEKVHVH (673 aa). The interval 1020–1041 is fusion peptide; sequence AGGITLGALGGGAVAIPFAVAV. The segment at 1035-1154 is heptad repeat 1 (HR1); sequence IPFAVAVQAR…QVDRLITGRL (120 aa). 2 coiled-coil regions span residues 1102–1146 and 1336–1378; these read QDVV…DAQV and TYLN…LEWL. A heptad repeat 2 (HR2) region spans residues 1303–1400; that stretch reads PDYIDINQTV…VWLLIGLVVI (98 aa). Residues 1389 to 1408 traverse the membrane as a helical segment; that stretch reads WYVWLLIGLVVIFCIPLLLF. The Intravirion portion of the chain corresponds to 1409 to 1447; it reads CCCSTGCCGCIGCLGSCCHSICSRRQFENYEPIEKVHVH. A KxHxx motif is present at residues 1443-1447; sequence KVHVH.

The protein belongs to the alphacoronaviruses spike protein family. Homotrimer. During virus morphogenesis, found in a complex with M and HE proteins. Interacts with host ANPEP.

It is found in the virion membrane. The protein resides in the host endoplasmic reticulum-Golgi intermediate compartment membrane. Its function is as follows. S1 region attaches the virion to the cell membrane by interacting with host ANPEP/aminopeptidase N, initiating the infection. Binding to the receptor probably induces conformational changes in the S glycoprotein unmasking the fusion peptide of S2 region and activating membranes fusion. S2 region belongs to the class I viral fusion protein. Under the current model, the protein has at least 3 conformational states: pre-fusion native state, pre-hairpin intermediate state, and post-fusion hairpin state. During viral and target cell membrane fusion, the coiled coil regions (heptad repeats) regions assume a trimer-of-hairpins structure, positioning the fusion peptide in close proximity to the C-terminal region of the ectodomain. The formation of this structure appears to drive apposition and subsequent fusion of viral and target cell membranes. The chain is Spike glycoprotein from Sus scrofa (Pig).